Here is a 260-residue protein sequence, read N- to C-terminus: Thiamine thiazole synthase (260 aa).

Residues Ala36, 55–56, Gly63, and 154–156 each bind NAD(+); these read EQ and HVD. Residues Asp156 and His171 each coordinate Fe cation. Residue Met224 coordinates NAD(+). Arg234 contributes to the glycine binding site.

It belongs to the THI4 family. As to quaternary structure, homooctamer; tetramer of dimers. Fe(2+) is required as a cofactor.

It catalyses the reaction hydrogen sulfide + glycine + NAD(+) = ADP-5-ethyl-4-methylthiazole-2-carboxylate + nicotinamide + 3 H2O + H(+). It functions in the pathway cofactor biosynthesis; thiamine diphosphate biosynthesis. Its function is as follows. Involved in the biosynthesis of the thiazole moiety of thiamine. Catalyzes the conversion of NAD and glycine to adenosine diphosphate 5-(2-hydroxyethyl)-4-methylthiazole-2-carboxylate (ADT), an adenylated thiazole intermediate, using free sulfide as a source of sulfur. The polypeptide is Thiamine thiazole synthase (Methanosarcina mazei (strain ATCC BAA-159 / DSM 3647 / Goe1 / Go1 / JCM 11833 / OCM 88) (Methanosarcina frisia)).